Reading from the N-terminus, the 311-residue chain is Putative S-adenosyl-L-methionine-dependent methyltransferase MUL_4761 (311 aa).

Residues D132 and 161 to 162 contribute to the S-adenosyl-L-methionine site; that span reads DL.

It belongs to the UPF0677 family.

Functionally, exhibits S-adenosyl-L-methionine-dependent methyltransferase activity. The sequence is that of Putative S-adenosyl-L-methionine-dependent methyltransferase MUL_4761 from Mycobacterium ulcerans (strain Agy99).